Consider the following 436-residue polypeptide: Prenyltransferase nscD (436 aa).

This sequence belongs to the tryptophan dimethylallyltransferase family.

The protein operates within secondary metabolite biosynthesis. Prenyltransferase; part of the gene cluster that mediates the biosynthesis of neosartoricin B, a prenylated anthracenone that probably exhibits T-cell antiproliferative activity, suggestive of a physiological role as an immunosuppressive agent. The non-reducing polyketide synthase nscA probably synthesizes and cyclizes the decaketide backbone. The hydrolase nscB then mediates the product release through hydrolysis followed by spontaneous decarboxylation. The prenyltransferase nscD catalyzes the addition of the dimethylallyl group to the aromatic C5. The FAD-dependent monooxygenase nscC is then responsible for the stereospecific hydroxylation at C2. Neosartoricin B can be converted into two additional compounds neosartoricins C and D. Neosartoricin C is a spirocyclic compound that is cyclized through the attack of C3 hydroxyl on C14, followed by dehydration. On the other hand, neosartoricin D is a further cyclized compound in which attack of C2 on C14 in neosartoricin C results in the formation of the acetal-containing dioxabicyclo-octanone ring. Both of these compounds are novel and possibly represent related metabolites of the gene cluster. The sequence is that of Prenyltransferase nscD from Trichophyton rubrum (strain ATCC MYA-4607 / CBS 118892) (Athlete's foot fungus).